The chain runs to 263 residues: Hydroxyethylthiazole kinase (263 aa).

Met41 lines the substrate pocket. ATP contacts are provided by Lys117 and Ser163. Gly190 is a binding site for substrate.

This sequence belongs to the Thz kinase family. It depends on Mg(2+) as a cofactor.

It catalyses the reaction 5-(2-hydroxyethyl)-4-methylthiazole + ATP = 4-methyl-5-(2-phosphooxyethyl)-thiazole + ADP + H(+). The protein operates within cofactor biosynthesis; thiamine diphosphate biosynthesis; 4-methyl-5-(2-phosphoethyl)-thiazole from 5-(2-hydroxyethyl)-4-methylthiazole: step 1/1. Functionally, catalyzes the phosphorylation of the hydroxyl group of 4-methyl-5-beta-hydroxyethylthiazole (THZ). In Thermoanaerobacter sp. (strain X514), this protein is Hydroxyethylthiazole kinase.